The primary structure comprises 42 residues: Photosystem II reaction center protein J (42 aa).

Residues 10–30 form a helical membrane-spanning segment; it reads IPLWLVLTIIGLAAIALLALF.

The protein belongs to the PsbJ family. As to quaternary structure, PSII is composed of 1 copy each of membrane proteins PsbA, PsbB, PsbC, PsbD, PsbE, PsbF, PsbH, PsbI, PsbJ, PsbK, PsbL, PsbM, PsbT, PsbY, PsbZ, Psb30/Ycf12, at least 3 peripheral proteins of the oxygen-evolving complex and a large number of cofactors. It forms dimeric complexes.

It localises to the plastid. The protein localises to the chloroplast thylakoid membrane. Its function is as follows. This protein is a component of the reaction center of photosystem II. In terms of biological role, one of the components of the core complex of photosystem II (PSII). PSII is a light-driven water:plastoquinone oxidoreductase that uses light energy to abstract electrons from H(2)O, generating O(2) and a proton gradient subsequently used for ATP formation. It consists of a core antenna complex that captures photons, and an electron transfer chain that converts photonic excitation into a charge separation. This chain is Photosystem II reaction center protein J, found in Euglena gracilis.